We begin with the raw amino-acid sequence, 139 residues long: uncharacterized protein (139 aa).

The region spanning 9-133 is the VOC domain; sequence QAAQIRIARP…DGWRIVFMNS (125 aa).

This is an uncharacterized protein from Bacillus subtilis (strain 168).